We begin with the raw amino-acid sequence, 242 residues long: Small ribosomal subunit protein uS2 (242 aa).

It belongs to the universal ribosomal protein uS2 family.

The sequence is that of Small ribosomal subunit protein uS2 from Shewanella pealeana (strain ATCC 700345 / ANG-SQ1).